Here is a 446-residue protein sequence, read N- to C-terminus: Probable tRNA modification GTPase MnmE (446 aa).

(6S)-5-formyl-5,6,7,8-tetrahydrofolate contacts are provided by Arg-28, Glu-87, and Arg-126. Residues Gly-218–Thr-373 enclose the TrmE-type G domain. A K(+)-binding site is contributed by Asn-228. Residues Asn-228–Thr-233, Thr-247–Thr-253, and Asp-272–Gly-275 contribute to the GTP site. Residue Ser-232 participates in Mg(2+) binding. Residues Thr-247, Ile-249, and Thr-252 each coordinate K(+). Mg(2+) is bound at residue Thr-253. Lys-446 lines the (6S)-5-formyl-5,6,7,8-tetrahydrofolate pocket.

This sequence belongs to the TRAFAC class TrmE-Era-EngA-EngB-Septin-like GTPase superfamily. TrmE GTPase family. Requires K(+) as cofactor.

The protein resides in the plastid. The protein localises to the chloroplast. Functionally, exhibits a very high intrinsic GTPase hydrolysis rate. Involved in the addition of a carboxymethylaminomethyl (cmnm) group at the wobble position (U34) of certain tRNAs, forming tRNA-cmnm(5)s(2)U34. The sequence is that of Probable tRNA modification GTPase MnmE from Cyanidioschyzon merolae (strain NIES-3377 / 10D) (Unicellular red alga).